Consider the following 365-residue polypeptide: D-alanine--D-alanine ligase (365 aa).

The ATP-grasp domain occupies 135–345; sequence KLLLKSFNIP…YGSLVDKLIA (211 aa). 168-223 provides a ligand contact to ATP; the sequence is KQSLDYPVIVKPAMLGSSIGISIAYNETQIEKCIEEAFAYDLTVVIEKFMRAREIE. Mg(2+) contacts are provided by D298, E312, and N314.

It belongs to the D-alanine--D-alanine ligase family. The cofactor is Mg(2+). It depends on Mn(2+) as a cofactor.

It localises to the cytoplasm. The enzyme catalyses 2 D-alanine + ATP = D-alanyl-D-alanine + ADP + phosphate + H(+). The protein operates within cell wall biogenesis; peptidoglycan biosynthesis. Its function is as follows. Cell wall formation. This Borrelia turicatae (strain 91E135) protein is D-alanine--D-alanine ligase.